The chain runs to 1028 residues: Beta-galactosidase (1028 aa).

Asparagine 104 and aspartate 203 together coordinate substrate. Aspartate 203 is a Na(+) binding site. Mg(2+) contacts are provided by glutamate 418, histidine 420, and glutamate 463. Residues glutamate 463 and 539-542 contribute to the substrate site; that span reads EYAH. Glutamate 463 (proton donor) is an active-site residue. Glutamate 539 acts as the Nucleophile in catalysis. Asparagine 599 serves as a coordination point for Mg(2+). Phenylalanine 603 and asparagine 606 together coordinate Na(+). Residues asparagine 606 and tryptophan 1004 each coordinate substrate.

The protein belongs to the glycosyl hydrolase 2 family. As to quaternary structure, homotetramer. Mg(2+) is required as a cofactor. The cofactor is Na(+).

The catalysed reaction is Hydrolysis of terminal non-reducing beta-D-galactose residues in beta-D-galactosides.. In Enterobacter sp. (strain 638), this protein is Beta-galactosidase.